A 929-amino-acid chain; its full sequence is Transcription initiation factor TFIID subunit 3 (929 aa).

Disordered stretches follow at residues 131-152 and 176-197; these read IVSSQEEEEEEQVPTDGGTSAE and LGKRPLDSPEAEELPAMKRPRL. Serine 183, serine 199, serine 229, and serine 243 each carry phosphoserine. Disordered regions lie at residues 221–358 and 405–578; these read TQKI…ETIQ and DPFE…PWKE. Low complexity predominate over residues 265-288; sequence TKSFTPKTKTKTSSPGQKTKSPKT. Position 266 is an N6-acetyllysine (lysine 266). Serine 291, serine 297, and serine 301 each carry phosphoserine. Polar residues-rich tracts occupy residues 340 to 358 and 434 to 466; these read PNRTPSATLSEKISKETIQ and PKASTSANNFTKSGSTPLPLSGGTSSSDNSWTM. Phosphothreonine is present on threonine 501. Residues 504-514 show a composition bias toward basic and acidic residues; that stretch reads PLHKVYEEKTK. A compositionally biased stretch (basic residues) spans 523–537; that stretch reads KKLKKELKTKMKKKE. A compositionally biased stretch (basic and acidic residues) spans 538–578; the sequence is KQRDREREKDKNKDKSKEKDKVKEKEKDKETGRETKYPWKE. Residue lysine 581 forms a Glycyl lysine isopeptide (Lys-Gly) (interchain with G-Cter in SUMO2) linkage. Basic and acidic residues-rich tracts occupy residues 603-612 and 621-648; these read KLKDGLVRKE and KDREKGKKDKDKREKEKVKDKGREDKMK. Residues 603 to 658 form a disordered region; sequence KLKDGLVRKEKEKHKDKKKDREKGKKDKDKREKEKVKDKGREDKMKAPAPPLVLPP. Position 667 is a phosphoserine (serine 667). Positions 692 to 701 are enriched in basic and acidic residues; that stretch reads EKEKVKEKEK. The disordered stretch occupies residues 692 to 748; the sequence is EKEKVKEKEKKKDKKEKKKKKEKEKEKKEKEREKEKREREKREKEKEKHKHEKIKVE. Residues 702–713 are compositionally biased toward basic residues; it reads KKDKKEKKKKKE. The segment covering 714-737 has biased composition (basic and acidic residues); the sequence is KEKEKKEKEREKEKREREKREKEK. Lysine 746 participates in a covalent cross-link: Glycyl lysine isopeptide (Lys-Gly) (interchain with G-Cter in SUMO2). Serine 755 is modified (phosphoserine). The residue at position 776 (lysine 776) is an N6-acetyllysine. The segment covering 778-787 has biased composition (low complexity); the sequence is VPAPEAKPAP. Residues 778–807 form a disordered region; the sequence is VPAPEAKPAPSQNRPKTPPPAPAPAPGPML. Residues 793 to 804 are compositionally biased toward pro residues; the sequence is KTPPPAPAPAPG. A PHD-type zinc finger spans residues 865 to 915; the sequence is IWICPGCNKPDDGSPMIGCDDCDDWYHWPCVGIMTAPPEEMQWFCPKCANK. Positions 868, 871, 883, 886, 891, 894, 909, and 912 each coordinate Zn(2+).

It belongs to the TAF3 family. Component of the TFIID basal transcription factor complex, composed of TATA-box-binding protein TBP, and a number of TBP-associated factors (TAFs), including TAF1, TAF2, TAF3, TAF4, TAF5, TAF6, TAF7, TAF8, TAF9, TAF10, TAF11, TAF12 and TAF13. Interacts with TAF10 via the histone fold. Interacts with TAF13, TBP, SAP130 and GCN5L2. Interacts with TBPL2.

The protein localises to the nucleus. In terms of biological role, the TFIID basal transcription factor complex plays a major role in the initiation of RNA polymerase II (Pol II)-dependent transcription. TFIID recognizes and binds promoters with or without a TATA box via its subunit TBP, a TATA-box-binding protein, and promotes assembly of the pre-initiation complex (PIC). The TFIID complex consists of TBP and TBP-associated factors (TAFs), including TAF1, TAF2, TAF3, TAF4, TAF5, TAF6, TAF7, TAF8, TAF9, TAF10, TAF11, TAF12 and TAF13. The TFIID complex structure can be divided into 3 modules TFIID-A, TFIID-B, and TFIID-C. TAF3 forms the TFIID-A module together with TAF5 and TBP. Required in complex with TBPL2 for the differentiation of myoblasts into myocytes. The TAF3-TBPL2 complex replaces TFIID at specific promoters at an early stage in the differentiation process. The protein is Transcription initiation factor TFIID subunit 3 (TAF3) of Homo sapiens (Human).